A 415-amino-acid chain; its full sequence is Phosphoglycerate kinase (415 aa).

Substrate-binding positions include 24–26 (DLN), arginine 43, 66–69 (HLGR), arginine 125, and arginine 165. ATP contacts are provided by residues lysine 215, glycine 303, glutamate 334, and 363–366 (GGDS).

This sequence belongs to the phosphoglycerate kinase family. In terms of assembly, monomer.

The protein resides in the cytoplasm. The catalysed reaction is (2R)-3-phosphoglycerate + ATP = (2R)-3-phospho-glyceroyl phosphate + ADP. Its pathway is carbohydrate degradation; glycolysis; pyruvate from D-glyceraldehyde 3-phosphate: step 2/5. The protein is Phosphoglycerate kinase of Mycobacterium avium (strain 104).